Reading from the N-terminus, the 84-residue chain is Large ribosomal subunit protein bL27 (84 aa).

A disordered region spans residues 1 to 23; sequence MAHKKGASSSRNGRESAAQRLGV.

The protein belongs to the bacterial ribosomal protein bL27 family.

This Salinispora arenicola (strain CNS-205) protein is Large ribosomal subunit protein bL27.